We begin with the raw amino-acid sequence, 439 residues long: Tol-Pal system protein TolB (439 aa).

The N-terminal stretch at 1 to 22 (MKKPLRWLAALTALLLPLSAFA) is a signal peptide.

Belongs to the TolB family. As to quaternary structure, the Tol-Pal system is composed of five core proteins: the inner membrane proteins TolA, TolQ and TolR, the periplasmic protein TolB and the outer membrane protein Pal. They form a network linking the inner and outer membranes and the peptidoglycan layer.

The protein localises to the periplasm. Functionally, part of the Tol-Pal system, which plays a role in outer membrane invagination during cell division and is important for maintaining outer membrane integrity. The sequence is that of Tol-Pal system protein TolB from Xanthomonas campestris pv. campestris (strain 8004).